A 1172-amino-acid polypeptide reads, in one-letter code: DNA-directed RNA polymerase subunit beta (1172 aa).

This sequence belongs to the RNA polymerase beta chain family. The RNAP catalytic core consists of 2 alpha, 1 beta, 1 beta' and 1 omega subunit. When a sigma factor is associated with the core the holoenzyme is formed, which can initiate transcription.

The catalysed reaction is RNA(n) + a ribonucleoside 5'-triphosphate = RNA(n+1) + diphosphate. DNA-dependent RNA polymerase catalyzes the transcription of DNA into RNA using the four ribonucleoside triphosphates as substrates. This chain is DNA-directed RNA polymerase subunit beta, found in Mycobacterium sp. (strain JLS).